We begin with the raw amino-acid sequence, 199 residues long: NAD(P)H dehydrogenase (quinone) (199 aa).

The 187-residue stretch at V4–I190 folds into the Flavodoxin-like domain. Residues S10–I15 and T78–F80 each bind FMN. An NAD(+)-binding site is contributed by Y12. W98 provides a ligand contact to substrate. FMN-binding positions include S113–G119 and H134.

It belongs to the WrbA family. FMN serves as cofactor.

It carries out the reaction a quinone + NADH + H(+) = a quinol + NAD(+). It catalyses the reaction a quinone + NADPH + H(+) = a quinol + NADP(+). The sequence is that of NAD(P)H dehydrogenase (quinone) from Bradyrhizobium sp. (strain BTAi1 / ATCC BAA-1182).